Consider the following 806-residue polypeptide: Plasminogen (806 aa).

The first 19 residues, 1 to 19, serve as a signal peptide directing secretion; the sequence is MEYGKVIFLFLLFLKSGQG. The PAN domain occupies 20–98; it reads ESLENYIKTE…RDVVLFEKRI (79 aa). 21 disulfide bridges follow: Cys-49–Cys-73, Cys-53–Cys-61, Cys-103–Cys-181, Cys-124–Cys-164, Cys-152–Cys-176, Cys-185–Cys-262, Cys-188–Cys-316, Cys-206–Cys-245, Cys-234–Cys-257, Cys-275–Cys-352, Cys-296–Cys-335, Cys-324–Cys-347, Cys-371–Cys-448, Cys-392–Cys-431, Cys-420–Cys-443, Cys-476–Cys-555, Cys-497–Cys-538, Cys-526–Cys-550, Cys-563–Cys-681, Cys-573–Cys-581, and Cys-603–Cys-619. Kringle domains follow at residues 102-181, 184-262, 274-352, 370-448, and 475-555; these read DCKS…VPEC, ECMH…IPRC, QCLK…IPSC, ECYE…LEKC, and DCMY…IPQC. The Peptidase S1 domain maps to 577-804; the sequence is IVGGCYAQPH…YISWIEDVMK (228 aa). Ser-593 carries the post-translational modification Phosphoserine. Residues His-618 and Asp-661 each act as charge relay system in the active site. Ser-684 carries the post-translational modification Phosphoserine. 3 cysteine pairs are disulfide-bonded: Cys-695/Cys-762, Cys-725/Cys-741, and Cys-752/Cys-780. Residue Ser-756 is the Charge relay system of the active site.

The protein belongs to the peptidase S1 family. Plasminogen subfamily. Interacts with CSPG4 and AMOT. Interacts (via the Kringle domains) with HRG; the interaction tethers PLG to the cell surface and enhances its activation. Interacts (via Kringle 4 domain) with ADA; the interaction stimulates PLG activation when in complex with DPP4. Angiostatin: Interacts with ATP5F1A; the interaction inhibits most of the angiogenic effects of angiostatin. In terms of processing, in the presence of the inhibitor, the activation involves only cleavage after Arg-576, yielding two chains held together by two disulfide bonds. In the absence of the inhibitor, the activation involves additionally the removal of the activation peptide.

Its subcellular location is the secreted. The catalysed reaction is Preferential cleavage: Lys-|-Xaa &gt; Arg-|-Xaa, higher selectivity than trypsin. Converts fibrin into soluble products.. Its activity is regulated as follows. Converted into plasmin by plasminogen activators, both plasminogen and its activator being bound to fibrin. Activated with catalytic amounts of streptokinase. Its function is as follows. Plasmin dissolves the fibrin of blood clots and acts as a proteolytic factor in a variety of other processes including embryonic development, tissue remodeling, tumor invasion, and inflammation. In ovulation, weakens the walls of the Graafian follicle. It activates the urokinase-type plasminogen activator, collagenases and several complement zymogens, such as C1, C4 and C5. Cleavage of fibronectin and laminin leads to cell detachment and apoptosis. Also cleaves fibrin, thrombospondin and von Willebrand factor. Its role in tissue remodeling and tumor invasion may be modulated by CSPG4. Binds to cells. This chain is Plasminogen (PLG), found in Notamacropus eugenii (Tammar wallaby).